The chain runs to 453 residues: Tubulin alpha-1/2/3 chain (453 aa).

Position 11 (Q11) interacts with GTP. Position 40 is an N6-acetyllysine (K40). GTP is bound by residues E71, S140, G144, T145, T179, N206, and N228. Mg(2+) is bound at residue E71. Residue E254 is part of the active site. The disordered stretch occupies residues 429–453 (EKDYEEVGTESQEGDGEEGEDGGDQ). Over residues 431 to 453 (DYEEVGTESQEGDGEEGEDGGDQ) the composition is skewed to acidic residues.

It belongs to the tubulin family. In terms of assembly, dimer of alpha and beta chains. A typical microtubule is a hollow water-filled tube with an outer diameter of 25 nm and an inner diameter of 15 nM. Alpha-beta heterodimers associate head-to-tail to form protofilaments running lengthwise along the microtubule wall with the beta-tubulin subunit facing the microtubule plus end conferring a structural polarity. Microtubules usually have 13 protofilaments but different protofilament numbers can be found in some organisms and specialized cells. Requires Mg(2+) as cofactor. In terms of processing, acetylation of alpha chains at Lys-40 stabilizes microtubules and affects affinity and processivity of microtubule motors. This modification has a role in multiple cellular functions, ranging from cell motility, cell cycle progression or cell differentiation to intracellular trafficking and signaling.

Its subcellular location is the cytoplasm. It localises to the cytoskeleton. It catalyses the reaction GTP + H2O = GDP + phosphate + H(+). Functionally, tubulin is the major constituent of microtubules, a cylinder consisting of laterally associated linear protofilaments composed of alpha- and beta-tubulin heterodimers. Microtubules grow by the addition of GTP-tubulin dimers to the microtubule end, where a stabilizing cap forms. Below the cap, tubulin dimers are in GDP-bound state, owing to GTPase activity of alpha-tubulin. The protein is Tubulin alpha-1/2/3 chain (TBA1) of Naegleria gruberi (Amoeba).